The sequence spans 661 residues: Transketolase (661 aa).

Ser2 carries the N-acetylserine modification. His31 is a substrate binding site. Thiamine diphosphate-binding positions include His71 and 119 to 121 (GPL). Asp160 is a Mg(2+) binding site. Positions 161 and 190 each coordinate thiamine diphosphate. Mg(2+)-binding residues include Asn190 and Val192. Positions 267, 359, and 386 each coordinate substrate. Residue His267 coordinates thiamine diphosphate. The active-site Proton donor is the Glu413. Position 439 (Phe439) interacts with thiamine diphosphate. 3 residues coordinate substrate: His463, Asp471, and Arg522.

The protein belongs to the transketolase family. Homodimer. It depends on Mg(2+) as a cofactor. Ca(2+) is required as a cofactor. The cofactor is Mn(2+). Requires Co(2+) as cofactor. Thiamine diphosphate serves as cofactor.

The enzyme catalyses D-sedoheptulose 7-phosphate + D-glyceraldehyde 3-phosphate = aldehydo-D-ribose 5-phosphate + D-xylulose 5-phosphate. Catalyzes the transfer of a two-carbon ketol group from a ketose donor to an aldose acceptor, via a covalent intermediate with the cofactor thiamine pyrophosphate. This is Transketolase (tkt-1) from Dictyostelium discoideum (Social amoeba).